A 316-amino-acid polypeptide reads, in one-letter code: Protease HtpX homolog (316 aa).

The chain crosses the membrane as a helical span at residues 16 to 36 (LFMGAGFLIGGATGMMIALVF). H134 is a binding site for Zn(2+). E135 is a catalytic residue. H138 provides a ligand contact to Zn(2+). A run of 2 helical transmembrane segments spans residues 149–169 (VTAT…FFGG) and 180–200 (LGGM…AMLV). Zn(2+) is bound at residue E209. The tract at residues 295-316 (PVMAATTSSSVPLSGERGGPWS) is disordered.

The protein belongs to the peptidase M48B family. Zn(2+) is required as a cofactor.

It is found in the cell inner membrane. In Caulobacter vibrioides (strain ATCC 19089 / CIP 103742 / CB 15) (Caulobacter crescentus), this protein is Protease HtpX homolog.